A 131-amino-acid polypeptide reads, in one-letter code: Transcription antitermination protein NusB (131 aa).

This sequence belongs to the NusB family.

In terms of biological role, involved in transcription antitermination. Required for transcription of ribosomal RNA (rRNA) genes. Binds specifically to the boxA antiterminator sequence of the ribosomal RNA (rrn) operons. In Bacillus pumilus (strain SAFR-032), this protein is Transcription antitermination protein NusB.